The sequence spans 314 residues: Probable cell division protein WhiA (314 aa).

The H-T-H motif DNA-binding region spans Ser-274–Ser-308.

The protein belongs to the WhiA family.

Functionally, involved in cell division and chromosome segregation. The sequence is that of Probable cell division protein WhiA from Staphylococcus haemolyticus (strain JCSC1435).